We begin with the raw amino-acid sequence, 730 residues long: LisH domain-containing protein ARMC9 (730 aa).

The LisH domain maps to 7-39; the sequence is HESELLGLVKEYLDFAEFEDTLKTFSKECKVKG. Residues 205-242 adopt a coiled-coil conformation; that stretch reads SNNKEMLQQLHQQLLEAERRAMAYLKRYNKMQADYHSL. Serine 583 is subject to Phosphoserine. The segment at 675 to 730 is disordered; it reads QNAQQARNGCPRPIPVAQPDDYKEGKRGVAGRATPSSCKSAECAEPVLSSGAQKPK.

As to quaternary structure, interacts with TOGARAM1, CCDC66, CEP104, CSPP1 and CEP290. Interacts with NDUFAF2.

Its subcellular location is the cytoplasm. The protein resides in the cytoskeleton. It localises to the cilium basal body. It is found in the cell projection. The protein localises to the cilium. Its subcellular location is the microtubule organizing center. The protein resides in the centrosome. It localises to the centriole. In terms of biological role, involved in ciliogenesis. It is required for appropriate acetylation and polyglutamylation of ciliary microtubules, and regulation of cilium length. Acts as a positive regulator of hedgehog (Hh)signaling. May participate in the trafficking and/or retention of GLI2 and GLI3 proteins at the ciliary tip. The polypeptide is LisH domain-containing protein ARMC9 (Armc9) (Rattus norvegicus (Rat)).